The primary structure comprises 161 residues: Small ribosomal subunit protein uS8m (161 aa).

Belongs to the universal ribosomal protein uS8 family. Component of the mitochondrial small ribosomal subunit (mt-SSU). Mature N.crassa 74S mitochondrial ribosomes consist of a small (37S) and a large (54S) subunit. The 37S small subunit contains a 16S ribosomal RNA (16S mt-rRNA) and 32 different proteins. The 54S large subunit contains a 23S rRNA (23S mt-rRNA) and 42 different proteins.

It is found in the mitochondrion. Component of the mitochondrial ribosome (mitoribosome), a dedicated translation machinery responsible for the synthesis of mitochondrial genome-encoded proteins, including at least some of the essential transmembrane subunits of the mitochondrial respiratory chain. The mitoribosomes are attached to the mitochondrial inner membrane and translation products are cotranslationally integrated into the membrane. This chain is Small ribosomal subunit protein uS8m (mrps8), found in Neurospora crassa (strain ATCC 24698 / 74-OR23-1A / CBS 708.71 / DSM 1257 / FGSC 987).